An 85-amino-acid chain; its full sequence is Colicin E3 immunity protein (85 aa).

This sequence belongs to the cloacin immunity protein family. In terms of assembly, native colicin E3 is a 1:1 complex of A chain and protein B (Im3). Binds between the translocation and cytotoxic RNase domains of intact ColE3, blocking access to the 16S rRNA substrate. Forms a very tight 1:1 complex with the cytotoxic fragment (residues 456-551) of ColE3 (ceaC).

The cognate immunity protein for colicin E3 (ColE3), protects cells which harbor the plasmid ColE3 against the toxic action of ColE3. This protein inhibits the 16S RNA hydrolyzing activity of ColE3 by binding with very high affinity to the C-terminal catalytic domain of ColE3. This is Colicin E3 immunity protein from Escherichia coli.